Consider the following 218-residue polypeptide: uncharacterized protein (218 aa).

The next 5 helical transmembrane spans lie at 19–39, 92–112, 124–144, 161–181, and 196–216; these read VFGF…FTII, FDYA…VSAV, YGLI…MILA, LLFE…IAPF, and YILM…EILL.

It is found in the cell membrane. This is an uncharacterized protein from Methanocaldococcus jannaschii (strain ATCC 43067 / DSM 2661 / JAL-1 / JCM 10045 / NBRC 100440) (Methanococcus jannaschii).